Here is a 106-residue protein sequence, read N- to C-terminus: Large ribosomal subunit protein eL42 (106 aa).

The interval 34-53 (YAQGKRRYDRKQSGYGGQTK) is disordered.

It belongs to the eukaryotic ribosomal protein eL42 family. As to quaternary structure, component of the large ribosomal subunit.

It localises to the cytoplasm. Component of the large ribosomal subunit. The ribosome is a large ribonucleoprotein complex responsible for the synthesis of proteins in the cell. In Canis lupus familiaris (Dog), this protein is Large ribosomal subunit protein eL42 (Rpl36a).